Reading from the N-terminus, the 447-residue chain is GTPase Der (447 aa).

EngA-type G domains lie at 3-167 (PVIA…VQER) and 181-354 (VKIA…AAAM). Residues 9–16 (GRPNVGKS), 56–60 (DTGGF), 119–122 (NKAE), 187–194 (GRPNVGKS), 234–238 (DTAGL), and 299–302 (NKWD) each bind GTP. One can recognise a KH-like domain in the interval 355–439 (IKLPTPQITR…PLRIEFRTNK (85 aa)).

Belongs to the TRAFAC class TrmE-Era-EngA-EngB-Septin-like GTPase superfamily. EngA (Der) GTPase family. In terms of assembly, associates with the 50S ribosomal subunit.

Its function is as follows. GTPase that plays an essential role in the late steps of ribosome biogenesis. This chain is GTPase Der, found in Cupriavidus metallidurans (strain ATCC 43123 / DSM 2839 / NBRC 102507 / CH34) (Ralstonia metallidurans).